A 95-amino-acid polypeptide reads, in one-letter code: Aspartyl/glutamyl-tRNA(Asn/Gln) amidotransferase subunit C (95 aa).

It belongs to the GatC family. In terms of assembly, heterotrimer of A, B and C subunits.

The enzyme catalyses L-glutamyl-tRNA(Gln) + L-glutamine + ATP + H2O = L-glutaminyl-tRNA(Gln) + L-glutamate + ADP + phosphate + H(+). It catalyses the reaction L-aspartyl-tRNA(Asn) + L-glutamine + ATP + H2O = L-asparaginyl-tRNA(Asn) + L-glutamate + ADP + phosphate + 2 H(+). In terms of biological role, allows the formation of correctly charged Asn-tRNA(Asn) or Gln-tRNA(Gln) through the transamidation of misacylated Asp-tRNA(Asn) or Glu-tRNA(Gln) in organisms which lack either or both of asparaginyl-tRNA or glutaminyl-tRNA synthetases. The reaction takes place in the presence of glutamine and ATP through an activated phospho-Asp-tRNA(Asn) or phospho-Glu-tRNA(Gln). This Caulobacter sp. (strain K31) protein is Aspartyl/glutamyl-tRNA(Asn/Gln) amidotransferase subunit C.